Reading from the N-terminus, the 613-residue chain is Ribosome-associated molecular chaperone SSB1 (613 aa).

The nucleotide binding domain (NBD) stretch occupies residues 1 to 391 (MADGVFQGAI…ILTGQSTSDE (391 aa)). ATP is bound by residues 16–18 (TTY), lysine 73, 205–207 (GGT), 271–278 (ERAKRTLS), and glycine 342. Positions 392 to 402 (TKDLLLLDVAP) are inter-domain linker. The substrate binding domain (SBD) stretch occupies residues 403–613 (LSLGVGMQGD…RVVTKAMSSR (211 aa)). A lid domain (SBDalpha) region spans residues 516–612 (SEDIEKMVNQ…KRVVTKAMSS (97 aa)). Residues 574 to 582 (IEAALADAL) carry the Nuclear export signal motif.

It belongs to the heat shock protein 70 family. Ssb-type Hsp70 subfamily. Binds to ribosomes. Binds close to the ribosomal tunnel exit via contacts with both ribosomal proteins and rRNA. Directly interacts with nascent polypeptides. This interaction is dependent on the ribosome-associated complex (RAC). Interacts with SSE1. Interacts with FES1.

The protein localises to the cytoplasm. The catalysed reaction is ATP + H2O = ADP + phosphate + H(+). In terms of biological role, ribosome-bound, Hsp70-type chaperone that assists in the cotranslational folding of newly synthesized proteins in the cytosol. Stimulates folding by interacting with nascent chains, binding to short, largely hydrophobic sequences exposed by unfolded proteins, thereby stabilizing longer, more slowly translated, and aggregation-prone nascent polypeptides and domains that cannot fold stably until fully synthesized. The Hsp70-protein substrate interaction depends on ATP-binding and on allosteric regulation between the NBD and the SBD. The ATP-bound state is characterized by a fast exchange rate of substrate (low affinity state), while in the ADP-bound state exchange is much slower (high affinity state). During the Hsp70 cycle, the chaperone switches between the ATP-bound state (open conformation) and the ADP-bound state (closed conformation) by major conformational rearrangements involving mainly the lid domain. Ssb cooperates with a specific Hsp40/Hsp70 co-chaperone termed the ribosome-associated complex (RAC), which stimulates the ATPase activity of the ribosome-associated pool of Ssbs and switches it to the high affinity substrate binding state. Hsp110 chaperone SSE1 and FES1 act as nucleotide exchange factors that cause substrate release. This Nakaseomyces delphensis (Yeast) protein is Ribosome-associated molecular chaperone SSB1 (SSB1).